Here is a 510-residue protein sequence, read N- to C-terminus: Beta-glucosidase 40 (510 aa).

The signal sequence occupies residues 1–29 (MAHRRLIMTMTKMMMMVTMMMMMDKTCIC). A beta-D-glucoside-binding positions include glutamine 51, histidine 152, and 197–198 (NE). Glutamate 198 acts as the Proton donor in catalysis. The cysteines at positions 217 and 225 are disulfide-linked. Asparagine 229 and asparagine 278 each carry an N-linked (GlcNAc...) asparagine glycan. Residue tyrosine 341 coordinates a beta-D-glucoside. Residue asparagine 349 is glycosylated (N-linked (GlcNAc...) asparagine). A beta-D-glucoside-binding positions include glutamate 414, tryptophan 464, 471 to 472 (EW), and phenylalanine 480. The active-site Nucleophile is glutamate 414. N-linked (GlcNAc...) asparagine glycosylation is present at asparagine 507.

This sequence belongs to the glycosyl hydrolase 1 family.

It carries out the reaction Hydrolysis of terminal, non-reducing beta-D-glucosyl residues with release of beta-D-glucose.. This chain is Beta-glucosidase 40, found in Arabidopsis thaliana (Mouse-ear cress).